The primary structure comprises 142 residues: Lipoprotein MlpI (142 aa).

A signal peptide spans 1–17 (MKIINILFCLFLLMLNS). Cysteine 18 carries the N-palmitoyl cysteine lipid modification. A lipid anchor (S-diacylglycerol cysteine) is attached at cysteine 18. The interval 22 to 54 (DTNTSQTKSRQKRDLTQKEATQEKPKSKEDLLR) is disordered. Residues 33–54 (KRDLTQKEATQEKPKSKEDLLR) show a composition bias toward basic and acidic residues.

Belongs to the Multicopy lipoprotein (Mlp) family.

It is found in the cell outer membrane. Its function is as follows. An outer membrane protein that may participate in pathogenesis. Some human Lyme disease patients have antibodies against this protein. The Mlp proteins probably undergo intragenic recombination, generating new alleles. The polypeptide is Lipoprotein MlpI (Borreliella burgdorferi (strain ATCC 35210 / DSM 4680 / CIP 102532 / B31) (Borrelia burgdorferi)).